Reading from the N-terminus, the 547-residue chain is Ganoderic acid synthetase CYP5150L8 (547 aa).

The chain crosses the membrane as a helical span at residues 2–22 (PDSSLVLVAIAGAAYIFWLVF). Position 487 (Cys487) interacts with heme.

The protein belongs to the cytochrome P450 family. The cofactor is heme.

It localises to the membrane. The catalysed reaction is lanosterol + reduced [NADPH--hemoprotein reductase] + O2 = 26-hydroxylanosterol + oxidized [NADPH--hemoprotein reductase] + H2O + H(+). The enzyme catalyses 26-hydroxylanosterol + reduced [NADPH--hemoprotein reductase] + O2 = 26-oxolanosterol + oxidized [NADPH--hemoprotein reductase] + 2 H2O + H(+). It carries out the reaction 26-oxolanosterol + reduced [NADPH--hemoprotein reductase] + O2 = 3beta-hydroxy-lanosta-8, 24-dien-26-oate + oxidized [NADPH--hemoprotein reductase] + H2O + 2 H(+). It participates in secondary metabolite biosynthesis; terpenoid biosynthesis. Cytochrome P450 monooxygenase that is involved in the biosynthesis of ganoderic acids (GA), a group of highly oxygenated lanostane-type triterpenoids which well recognized as a main group of unique bioactive compounds in the medicinal mushroom Ganoderma lucidum. CYP5150L8 alone is able to catalyze the three-step oxidations at C-26 from lanosterol to 3-hydroxy-lanosta-8,24-dien-26-oic acid (also called ganoderic acid Z or HLDOA). The methyl group of lanosterol at C-26 is first oxidized into hydroxyl group to form 3-hydroxy-lanosta-8,24-dien-26-ol (HLDO). The hydroxyl group at C-26 of HLDO is further converted into a formyl group to form 3-hydroxy-lanosta-8,24-dien-26-al (HLDA). Finally, the formyl group is oxidized into a carboxyl group to produce 3-hydroxy-lanosta-8,24-dien-26-oic acid (HLDOA). The chain is Ganoderic acid synthetase CYP5150L8 from Ganoderma lucidum (Ling zhi medicinal fungus).